Consider the following 529-residue polypeptide: Ribonuclease Y (529 aa).

Residues 4-24 form a helical membrane-spanning segment; sequence GLIYISLEVLVACLITALVMY. The KH domain occupies 216 to 297; it reads LTTRIALPCS…NRIEEVYHRV (82 aa). The HD domain maps to 342–435; it reads ALQHSKEVAL…VCAADALSAG (94 aa).

It belongs to the RNase Y family.

It is found in the cell membrane. Its function is as follows. Endoribonuclease that initiates mRNA decay. This Helicobacter pylori (strain ATCC 700392 / 26695) (Campylobacter pylori) protein is Ribonuclease Y.